Here is a 473-residue protein sequence, read N- to C-terminus: UDP-N-acetylmuramate--L-alanine ligase (473 aa).

Residue 112–118 (GTHGKTT) coordinates ATP.

This sequence belongs to the MurCDEF family.

The protein resides in the cytoplasm. It carries out the reaction UDP-N-acetyl-alpha-D-muramate + L-alanine + ATP = UDP-N-acetyl-alpha-D-muramoyl-L-alanine + ADP + phosphate + H(+). Its pathway is cell wall biogenesis; peptidoglycan biosynthesis. In terms of biological role, cell wall formation. This chain is UDP-N-acetylmuramate--L-alanine ligase, found in Nitrosomonas europaea (strain ATCC 19718 / CIP 103999 / KCTC 2705 / NBRC 14298).